Reading from the N-terminus, the 371-residue chain is MSL complex subunit 3B (371 aa).

Disordered stretches follow at residues 1-44 and 160-229; these read MATL…READ and EERA…SPQA. The span at 8 to 44 shows a compositional bias: basic and acidic residues; sequence PKDDGEGKDEGGSDRGDGDPKPKGKKEVEAHTRREAD. Positions 44 to 367 constitute an MRG domain; sequence DERAVRIPIP…CEAHYSSKNP (324 aa). Residues 206–216 are compositionally biased toward basic residues; it reads APRRSTRHSTH.

It localises to the nucleus. Functionally, probable non-catalytic component of the MSL histone acetyltransferase complex, a multiprotein complex that mediates the majority of histone H4 acetylation at 'Lys-16' (H4K16ac), an epigenetic mark that prevents chromatin compaction. The sequence is that of MSL complex subunit 3B from Rattus norvegicus (Rat).